Here is a 267-residue protein sequence, read N- to C-terminus: MSHYPASGTWQACPKCGRHVHQRQWGTYQQCPYCHYWQRLTTAQRLEQLVDEGSFQPLTMTERPVNQLGFPDYMNKLRRAQRQTGLNEAVVCGTALIEQQPCILAVMDSHFMMGTLNTAVTRRLLHASEQARAQRLPLIIVTASGGARMQEGVYALVGMNLILAELARLAATPLPLITVLTDPTMGGVSASFAFKGDLIIAEAGAKIGFAGARVIQQTLPVKLPADFQTADQLFKNGMVDAVVERPQLRSTLGQALVNYGIGRSAHG.

In terms of domain architecture, CoA carboxyltransferase N-terminal spans 9–267; the sequence is TWQACPKCGR…NYGIGRSAHG (259 aa). C13, C16, C31, and C34 together coordinate Zn(2+). The C4-type zinc-finger motif lies at 13-34; the sequence is CPKCGRHVHQRQWGTYQQCPYC.

The protein belongs to the AccD/PCCB family. Acetyl-CoA carboxylase is a heterohexamer composed of biotin carboxyl carrier protein (AccB), biotin carboxylase (AccC) and two subunits each of ACCase subunit alpha (AccA) and ACCase subunit beta (AccD). It depends on Zn(2+) as a cofactor.

The protein resides in the cytoplasm. The enzyme catalyses N(6)-carboxybiotinyl-L-lysyl-[protein] + acetyl-CoA = N(6)-biotinyl-L-lysyl-[protein] + malonyl-CoA. It functions in the pathway lipid metabolism; malonyl-CoA biosynthesis; malonyl-CoA from acetyl-CoA: step 1/1. Functionally, component of the acetyl coenzyme A carboxylase (ACC) complex. Biotin carboxylase (BC) catalyzes the carboxylation of biotin on its carrier protein (BCCP) and then the CO(2) group is transferred by the transcarboxylase to acetyl-CoA to form malonyl-CoA. The protein is Acetyl-coenzyme A carboxylase carboxyl transferase subunit beta 1 of Lactiplantibacillus plantarum (strain ATCC BAA-793 / NCIMB 8826 / WCFS1) (Lactobacillus plantarum).